The sequence spans 120 residues: Large ribosomal subunit protein bL12 (120 aa).

This sequence belongs to the bacterial ribosomal protein bL12 family. As to quaternary structure, homodimer. Part of the ribosomal stalk of the 50S ribosomal subunit. Forms a multimeric L10(L12)X complex, where L10 forms an elongated spine to which 2 to 4 L12 dimers bind in a sequential fashion. Binds GTP-bound translation factors.

Its function is as follows. Forms part of the ribosomal stalk which helps the ribosome interact with GTP-bound translation factors. Is thus essential for accurate translation. The chain is Large ribosomal subunit protein bL12 from Lactobacillus helveticus (strain DPC 4571).